The chain runs to 217 residues: uncharacterized protein (217 aa).

The first 32 residues, 1 to 32 (MPITKATPLFLRYRLKGFVFLTLLLVQGVFTA), serve as a signal peptide directing secretion. Cys33 is lipidated: N-palmitoyl cysteine. Cys33 carries the S-diacylglycerol cysteine lipid modification.

This sequence belongs to the MG067/MG068/MG395 family.

The protein localises to the cell membrane. This is an uncharacterized protein from Mycoplasma pneumoniae (strain ATCC 29342 / M129 / Subtype 1) (Mycoplasmoides pneumoniae).